The primary structure comprises 531 residues: Protein tweety homolog 2-like (531 aa).

Topologically, residues 1–44 (MASSRQDYIAPWWTYWLHNFPHLNFNFQTVDNTFKPEDASYQQS) are extracellular. Residues 45 to 65 (LVFLACVSAVALGLCLLLLSV) traverse the membrane as a helical segment. Topologically, residues 66–87 (YLTCLCCCRREEDEEVKRPDTC) are cytoplasmic. A helical transmembrane segment spans residues 88-108 (CVTWAAVITGLVICSAVGVGF). The Extracellular portion of the chain corresponds to 109-213 (YGNSETNDGV…RTAFIEYYRW (105 aa)). N-linked (GlcNAc...) asparagine glycosylation occurs at asparagine 129. Residues 214–234 (LTYLLLLILDLVICLLACLAL) form a helical membrane-spanning segment. At 235 to 239 (AKQSR) the chain is on the cytoplasmic side. The helical transmembrane segment at 240–260 (WLLTVIMVCGMLTLIMSWASL) threads the bilayer. At 261–389 (GAGTATAVGT…GVCYDGVEGL (129 aa)) the chain is on the extracellular side. N-linked (GlcNAc...) asparagine glycosylation is found at asparagine 283 and asparagine 352. Residues 390–410 (LYLCLFSLLAACAFCALLCAV) form a helical membrane-spanning segment. At 411 to 531 (PRAWMLIAIR…IRHFGTDFQV (121 aa)) the chain is on the cytoplasmic side.

The protein belongs to the tweety family.

It localises to the cell membrane. Probable large-conductance Ca(2+)-activated chloride channel. In Danio rerio (Zebrafish), this protein is Protein tweety homolog 2-like (ttyh2l).